Reading from the N-terminus, the 751-residue chain is Catalase-peroxidase (751 aa).

The tract at residues 1 to 21 is disordered; that stretch reads MSNESKCPFHQTAGGGTTNRD. Positions 90 to 244 form a cross-link, tryptophyl-tyrosyl-methioninium (Trp-Tyr) (with M-270); that stretch reads WHSAGTYRIG…LAAVQMGLIY (155 aa). His91 serves as the catalytic Proton acceptor. The segment at 195–227 is disordered; the sequence is YGKDQVKAQPPGQGDLVAEPAKHGEEQNRDLSA. The segment covering 214 to 227 has biased composition (basic and acidic residues); it reads PAKHGEEQNRDLSA. Positions 244–270 form a cross-link, tryptophyl-tyrosyl-methioninium (Tyr-Met) (with W-90); it reads YVNPEGPEGNPDPVASGKDIRETFGRM. Heme b is bound at residue His285. Residues 365 to 387 form a disordered region; that stretch reads AHQWRPKEGKGAGTVPDAHDPGK.

This sequence belongs to the peroxidase family. Peroxidase/catalase subfamily. As to quaternary structure, homodimer or homotetramer. Heme b is required as a cofactor. Formation of the three residue Trp-Tyr-Met cross-link is important for the catalase, but not the peroxidase activity of the enzyme.

The catalysed reaction is H2O2 + AH2 = A + 2 H2O. It catalyses the reaction 2 H2O2 = O2 + 2 H2O. Its function is as follows. Bifunctional enzyme with both catalase and broad-spectrum peroxidase activity. This Pseudomonas putida (strain ATCC 700007 / DSM 6899 / JCM 31910 / BCRC 17059 / LMG 24140 / F1) protein is Catalase-peroxidase.